The chain runs to 173 residues: Crossover junction endodeoxyribonuclease RuvC (173 aa).

Active-site residues include Asp8, Glu67, and Asp139. Residues Asp8, Glu67, and Asp139 each contribute to the Mg(2+) site.

This sequence belongs to the RuvC family. Homodimer which binds Holliday junction (HJ) DNA. The HJ becomes 2-fold symmetrical on binding to RuvC with unstacked arms; it has a different conformation from HJ DNA in complex with RuvA. In the full resolvosome a probable DNA-RuvA(4)-RuvB(12)-RuvC(2) complex forms which resolves the HJ. Mg(2+) is required as a cofactor.

Its subcellular location is the cytoplasm. The catalysed reaction is Endonucleolytic cleavage at a junction such as a reciprocal single-stranded crossover between two homologous DNA duplexes (Holliday junction).. The RuvA-RuvB-RuvC complex processes Holliday junction (HJ) DNA during genetic recombination and DNA repair. Endonuclease that resolves HJ intermediates. Cleaves cruciform DNA by making single-stranded nicks across the HJ at symmetrical positions within the homologous arms, yielding a 5'-phosphate and a 3'-hydroxyl group; requires a central core of homology in the junction. The consensus cleavage sequence is 5'-(A/T)TT(C/G)-3'. Cleavage occurs on the 3'-side of the TT dinucleotide at the point of strand exchange. HJ branch migration catalyzed by RuvA-RuvB allows RuvC to scan DNA until it finds its consensus sequence, where it cleaves and resolves the cruciform DNA. Its function is as follows. Plays a role in recovery after DNA ADP-ribosylation, probably via replication fork reversal. In Escherichia coli O127:H6 (strain E2348/69 / EPEC), this protein is Crossover junction endodeoxyribonuclease RuvC.